Here is a 172-residue protein sequence, read N- to C-terminus: Ferritin-2 heavy chain (172 aa).

The Ferritin-like diiron domain maps to glutamine 8–glycine 157. 5 residues coordinate Fe cation: glutamate 25, glutamate 60, histidine 63, glutamate 105, and glutamine 139.

This sequence belongs to the ferritin family. In terms of assembly, oligomer of 24 subunits. The functional molecule forms a roughly spherical shell with a diameter of 12 nm and contains a central cavity into which the insoluble mineral iron core is deposited.

The catalysed reaction is 4 Fe(2+) + O2 + 4 H(+) = 4 Fe(3+) + 2 H2O. In terms of biological role, stores iron in a soluble, non-toxic, readily available form. Important for iron homeostasis. Has ferroxidase activity. Iron is taken up in the ferrous form and deposited as ferric hydroxides after oxidation. The protein is Ferritin-2 heavy chain (SCM-2) of Schistosoma mansoni (Blood fluke).